Consider the following 261-residue polypeptide: Calbindin (261 aa).

An N-acetylalanine modification is found at Ala2. The segment at 2–7 is interaction with RANBP9; sequence AESHLQ. 5 consecutive EF-hand domains span residues 11 to 46, 53 to 88, 98 to 133, 142 to 177, and 186 to 221; these read ITASQFFEIWLHFDADGSGYLEGKELQNLIQELLQA, ELSPEMKTFVDQYGQRDDGKIGIVELAHVLPTEENF, KSCEEFMKTWRKYDTDHSGFIETEELKNFLKDLLEK, KLAEYTDLMLKLFDSNNDGKLELTEMARLLPVQENF, and MCGKEFNKAFELYDQDGNGYIDENELDALLKDLCEK. Residues Asp24, Asp26, Ser28, Tyr30, and Glu35 each coordinate Ca(2+). Residues Asp111, Asp113, Ser115, Glu122, Asp155, Asn157, Asp159, Lys161, Glu166, Asp199, Asp201, Asn203, Tyr205, and Glu210 each contribute to the Ca(2+) site.

Belongs to the calbindin family. As to quaternary structure, interacts with RANBP9.

Buffers cytosolic calcium. May stimulate a membrane Ca(2+)-ATPase and a 3',5'-cyclic nucleotide phosphodiesterase. This chain is Calbindin (Calb1), found in Rattus norvegicus (Rat).